Here is a 197-residue protein sequence, read N- to C-terminus: Probable GTP-binding protein EngB (197 aa).

In terms of domain architecture, EngB-type G spans 22 to 195; that stretch reads GFPEIGLAGR…WQWIEAHTVG (174 aa). GTP contacts are provided by residues 30–37, 57–61, 75–78, 142–145, and 174–176; these read GRSNVGKS, GKTQT, DVPG, TKSD, and FSA. Mg(2+) contacts are provided by S37 and T59.

It belongs to the TRAFAC class TrmE-Era-EngA-EngB-Septin-like GTPase superfamily. EngB GTPase family. Mg(2+) serves as cofactor.

Functionally, necessary for normal cell division and for the maintenance of normal septation. The chain is Probable GTP-binding protein EngB from Lactiplantibacillus plantarum (strain ATCC BAA-793 / NCIMB 8826 / WCFS1) (Lactobacillus plantarum).